Consider the following 276-residue polypeptide: Phospholipid phosphatase 2 (276 aa).

Over 1-4 (MERR) the chain is Cytoplasmic. A helical membrane pass occupies residues 5–25 (WVFVLLDVLCVLVASLPFIIL). At 26–51 (TLVNAPYKRGFYCGDDSIRYPYRPDT) the chain is on the lumenal side. Residues 52–72 (ITHGLMAGVIITATVILVSLG) traverse the membrane as a helical segment. Topologically, residues 73–87 (EAYLVYTDRLYSRSN) are cytoplasmic. A helical transmembrane segment spans residues 88 to 108 (FNNYVAAIYKVLGTFLFGAAV). At 109–161 (SQSLTDLAKYMIGRLRPSFLAVCDPDWSQVNCSGYVQLEVCRGSPANVTEARL) the chain is on the lumenal side. A phosphatase sequence motif I region spans residues 117 to 125 (KYMIGRLRP). 2 N-linked (GlcNAc...) asparagine glycosylation sites follow: Asn-139 and Asn-155. The chain crosses the membrane as a helical span at residues 162-182 (SFYSGHSSFGMYCMLFLALYV). Residues 164-167 (YSGH) form a phosphatase sequence motif II region. His-167 acts as the Proton donors in catalysis. Topologically, residues 183–189 (QARLCWK) are cytoplasmic. Residues 190–210 (WARLLRPTVQFFLVAFAIYVG) traverse the membrane as a helical segment. The Lumenal portion of the chain corresponds to 211–218 (YTRVSDHK). A phosphatase sequence motif III region spans residues 212–223 (TRVSDHKHHWSD). Residue His-219 is the Nucleophile of the active site. A helical transmembrane segment spans residues 219 to 239 (HHWSDVLVGLLQGALVACLTV). Topologically, residues 240–276 (RYVSDFFKSRPPQPCQEDEVPERKPSLSLTLTLGDRP) are cytoplasmic. Residues 251–276 (PQPCQEDEVPERKPSLSLTLTLGDRP) form a disordered region.

Belongs to the PA-phosphatase related phosphoesterase family. Forms functional homodimers and homooligomers. Can also form heterooligomers with PLPP1 and PLPP3. Post-translationally, N-glycosylated. Expressed at high levels in lung, liver and kidney; at low levels in heart and brain, and was not detected in skeletal muscle.

Its subcellular location is the membrane. It is found in the cell membrane. The protein resides in the early endosome membrane. The protein localises to the endoplasmic reticulum membrane. It catalyses the reaction a 1,2-diacyl-sn-glycero-3-phosphate + H2O = a 1,2-diacyl-sn-glycerol + phosphate. The catalysed reaction is 1,2-dihexadecanoyl-sn-glycero-3-phosphate + H2O = 1,2-dihexadecanoyl-sn-glycerol + phosphate. It carries out the reaction 1,2-di-(9Z-octadecenoyl)-sn-glycero-3-phosphate + H2O = 1,2-di-(9Z-octadecenoyl)-sn-glycerol + phosphate. The enzyme catalyses a monoacyl-sn-glycero-3-phosphate + H2O = a monoacylglycerol + phosphate. It catalyses the reaction (9Z)-octadecenoyl-sn-glycero-3-phosphate + H2O = (9Z-octadecenoyl)-glycerol + phosphate. The catalysed reaction is sphing-4-enine 1-phosphate + H2O = sphing-4-enine + phosphate. It carries out the reaction an N-acylsphing-4-enine 1-phosphate + H2O = an N-acylsphing-4-enine + phosphate. The enzyme catalyses N-(octanoyl)-sphing-4-enine-1-phosphate + H2O = N-octanoylsphing-4-enine + phosphate. It catalyses the reaction N-(9Z-octadecenoyl)-ethanolamine phosphate + H2O = N-(9Z-octadecenoyl) ethanolamine + phosphate. It participates in lipid metabolism; phospholipid metabolism. Magnesium-independent phospholipid phosphatase. Insensitive to N-ethylmaleimide. Functionally, magnesium-independent phospholipid phosphatase that catalyzes the dephosphorylation of a variety of glycerolipid and sphingolipid phosphate esters including phosphatidate/PA, lysophosphatidate/LPA, sphingosine 1-phosphate/S1P and ceramide 1-phosphate/C1P. Has no apparent extracellular phosphatase activity and therefore most probably acts intracellularly. Also acts on N-oleoyl ethanolamine phosphate/N-(9Z-octadecenoyl)-ethanolamine phosphate, a potential physiological compound. Through dephosphorylation of these bioactive lipid mediators produces new bioactive compounds and may regulate signal transduction in different cellular processes. Indirectly regulates, for instance, cell cycle G1/S phase transition through its phospholipid phosphatase activity. This Mus musculus (Mouse) protein is Phospholipid phosphatase 2.